Consider the following 341-residue polypeptide: Glyceraldehyde-3-phosphate dehydrogenase, cytosolic (341 aa).

NAD(+)-binding positions include 14–15 (RI) and D36. D-glyceraldehyde 3-phosphate-binding positions include 153-155 (SCT), T184, 213-214 (TG), and R236. The Nucleophile role is filled by C154. N318 is an NAD(+) binding site.

It belongs to the glyceraldehyde-3-phosphate dehydrogenase family. As to quaternary structure, homotetramer.

It localises to the cytoplasm. It catalyses the reaction D-glyceraldehyde 3-phosphate + phosphate + NAD(+) = (2R)-3-phospho-glyceroyl phosphate + NADH + H(+). The protein operates within carbohydrate degradation; glycolysis; pyruvate from D-glyceraldehyde 3-phosphate: step 1/5. Key enzyme in glycolysis that catalyzes the first step of the pathway by converting D-glyceraldehyde 3-phosphate (G3P) into 3-phospho-D-glyceroyl phosphate. Essential for the maintenance of cellular ATP levels and carbohydrate metabolism. The sequence is that of Glyceraldehyde-3-phosphate dehydrogenase, cytosolic (GAPC) from Chlamydomonas reinhardtii (Chlamydomonas smithii).